Here is a 201-residue protein sequence, read N- to C-terminus: Ribonuclease HII (201 aa).

One can recognise an RNase H type-2 domain in the interval 12–201 (DLVAGVDEVG…VRELLDVSVQ (190 aa)). Residues aspartate 18, glutamate 19, and aspartate 110 each coordinate a divalent metal cation.

The protein belongs to the RNase HII family. It depends on Mn(2+) as a cofactor. The cofactor is Mg(2+).

It localises to the cytoplasm. The enzyme catalyses Endonucleolytic cleavage to 5'-phosphomonoester.. Endonuclease that specifically degrades the RNA of RNA-DNA hybrids. This Pseudomonas aeruginosa (strain LESB58) protein is Ribonuclease HII.